Consider the following 407-residue polypeptide: Tryptophan synthase beta chain (407 aa).

The residue at position 91 (Lys91) is an N6-(pyridoxal phosphate)lysine.

This sequence belongs to the TrpB family. In terms of assembly, tetramer of two alpha and two beta chains. Pyridoxal 5'-phosphate is required as a cofactor.

The enzyme catalyses (1S,2R)-1-C-(indol-3-yl)glycerol 3-phosphate + L-serine = D-glyceraldehyde 3-phosphate + L-tryptophan + H2O. The protein operates within amino-acid biosynthesis; L-tryptophan biosynthesis; L-tryptophan from chorismate: step 5/5. Its function is as follows. The beta subunit is responsible for the synthesis of L-tryptophan from indole and L-serine. This chain is Tryptophan synthase beta chain, found in Streptococcus pneumoniae (strain Hungary19A-6).